A 268-amino-acid polypeptide reads, in one-letter code: Tropinone reductase homolog (268 aa).

21–45 (LVTGGTRGIGYAIVEELANFGAEVY) contacts NADP(+). Ser154 serves as a coordination point for substrate. The active-site Proton acceptor is the Tyr167.

It belongs to the short-chain dehydrogenases/reductases (SDR) family.

This is Tropinone reductase homolog from Datura stramonium (Jimsonweed).